The chain runs to 201 residues: FMN-dependent NADH:quinone oxidoreductase (201 aa).

FMN is bound by residues Ser-10, 16–18 (SQS), 95–98 (MYNF), and 139–142 (TTGG).

It belongs to the azoreductase type 1 family. As to quaternary structure, homodimer. FMN is required as a cofactor.

It catalyses the reaction 2 a quinone + NADH + H(+) = 2 a 1,4-benzosemiquinone + NAD(+). It carries out the reaction N,N-dimethyl-1,4-phenylenediamine + anthranilate + 2 NAD(+) = 2-(4-dimethylaminophenyl)diazenylbenzoate + 2 NADH + 2 H(+). Its function is as follows. Quinone reductase that provides resistance to thiol-specific stress caused by electrophilic quinones. Functionally, also exhibits azoreductase activity. Catalyzes the reductive cleavage of the azo bond in aromatic azo compounds to the corresponding amines. This chain is FMN-dependent NADH:quinone oxidoreductase, found in Tolumonas auensis (strain DSM 9187 / NBRC 110442 / TA 4).